The chain runs to 706 residues: Semenogelin-2 (706 aa).

The N-terminal stretch at 1–23 is a signal peptide; it reads MKSIILFVLSLLLILEKQAAVMG. Disordered regions lie at residues 25 to 62, 131 to 156, and 276 to 678; these read KGGS…SKGS, KGGQ…KGIF, and NLNQ…SGAH. A compositionally biased stretch (basic and acidic residues) spans 50-59; the sequence is GQKDKQHTES. Over residues 137–151 the composition is skewed to polar residues; sequence HGTQNPSQDQGNSPS. Residues 297–308 are compositionally biased toward basic and acidic residues; it reads TEERQPNHEENS. The span at 329 to 339 shows a compositional bias: polar residues; it reads KSQNQVTIPSQ. The segment covering 340 to 349 has biased composition (basic and acidic residues); sequence DQEHGHKENK. The span at 389–399 shows a compositional bias: polar residues; that stretch reads KSQNQVTIPSQ. Over residues 400-409 the composition is skewed to basic and acidic residues; the sequence is DQEHGHKENK. The span at 449–459 shows a compositional bias: polar residues; sequence KSQNQVTIPSQ. Basic and acidic residues predominate over residues 460-469; that stretch reads DQEHGHKENK. The segment covering 509-519 has biased composition (polar residues); that stretch reads KSQNQVAIPSQ. A compositionally biased stretch (basic and acidic residues) spans 520 to 529; the sequence is DQEHGHKENK. Residues 569–579 are compositionally biased toward polar residues; the sequence is KSQNQVTIPSQ. Residues 580–589 show a composition bias toward basic and acidic residues; sequence DQEHGHKENK. Composition is skewed to polar residues over residues 611–622 and 630–653; these read KDVSQSSLSFQT and SQIQ…NSGK. Residues 654–670 are compositionally biased toward basic and acidic residues; that stretch reads SADREQDLLSHEQEGRY.

Belongs to the semenogelin family. As to quaternary structure, interacts with SERPINA5.

It localises to the secreted. Functionally, participates in the formation of a gel matrix (sperm coagulum) entrapping the accessory gland secretions and ejaculated spermatozoa. This Macaca mulatta (Rhesus macaque) protein is Semenogelin-2 (SEMG2).